Reading from the N-terminus, the 464-residue chain is Transcription factor EAT1 (464 aa).

Residues 261-274 (GKGKANFATERERR) are basic motif; degenerate. Residues 261-310 (GKGKANFATERERREQLNVKFRTLRMLFPNPTKNDRASIVGDAIEYIDEL) enclose the bHLH domain. Residues 275 to 310 (EQLNVKFRTLRMLFPNPTKNDRASIVGDAIEYIDEL) are helix-loop-helix motif. Positions 338 to 357 (QEAAADGESSSMRPVRDDQD) are disordered.

It belongs to the bHLH protein family. In terms of assembly, interacts with TDR.

The protein localises to the nucleus. Its function is as follows. Transcription factor involved in the regulation of tapetum programmed cell death (PCD) and degradation during male reproductive development. Interacts with TDR and promote tapetal PCD by regulating the expression of RTS, and the two lipid-transfer proteins C4 and C6, which function in microspore development. Acts downstream from and interacts with TDR in the regulation of tapetal PCD. Regulates directly the aspartic protease AP25 and AP37 during tapetal PCD. May not target the cysteine protease CP1. This is Transcription factor EAT1 from Oryza sativa subsp. japonica (Rice).